A 185-amino-acid polypeptide reads, in one-letter code: ATP synthase subunit b 2 (185 aa).

Residues M1–F25 form a disordered region. The chain crosses the membrane as a helical span at residues A34–L56.

This sequence belongs to the ATPase B chain family. As to quaternary structure, F-type ATPases have 2 components, F(1) - the catalytic core - and F(0) - the membrane proton channel. F(1) has five subunits: alpha(3), beta(3), gamma(1), delta(1), epsilon(1). F(0) has three main subunits: a(1), b(2) and c(10-14). The alpha and beta chains form an alternating ring which encloses part of the gamma chain. F(1) is attached to F(0) by a central stalk formed by the gamma and epsilon chains, while a peripheral stalk is formed by the delta and b chains.

The protein resides in the cell inner membrane. Its function is as follows. F(1)F(0) ATP synthase produces ATP from ADP in the presence of a proton or sodium gradient. F-type ATPases consist of two structural domains, F(1) containing the extramembraneous catalytic core and F(0) containing the membrane proton channel, linked together by a central stalk and a peripheral stalk. During catalysis, ATP synthesis in the catalytic domain of F(1) is coupled via a rotary mechanism of the central stalk subunits to proton translocation. Component of the F(0) channel, it forms part of the peripheral stalk, linking F(1) to F(0). The b'-subunit is a diverged and duplicated form of b found in plants and photosynthetic bacteria. The protein is ATP synthase subunit b 2 (atpF2) of Nitrobacter winogradskyi (strain ATCC 25391 / DSM 10237 / CIP 104748 / NCIMB 11846 / Nb-255).